Reading from the N-terminus, the 839-residue chain is Katanin p80 WD40 repeat-containing subunit B1 homolog KTN80.3 (839 aa).

WD repeat units lie at residues 14–54 (AHSA…AILS), 57–96 (GHSSGIDSVTFDASEGLVAAGAASGTIKLWDLEEAKVVRT), 99–138 (GHRSNCVSVNFHPFGEFFASGSLDTNLKIWDIRKKGCIHT), 141–182 (GHTR…HEFK), 184–222 (HEGKIQSLDFHPHEFLLATGSADKTVKFWDLETFELIGS), 225–265 (TETT…DGVD), and 267–304 (GWSNLSDMNVHEGKLLGCSYNQNCVGVWVVDLSRTEPM). The short motif at 115–131 (FFASGSLDTNLKIWDIR) is the DWD box element. Disordered regions lie at residues 303-340 (PMSGGATQSNSHPEKTSGSGRDQAGLNDNSSKVILGKL), 357-435 (GKLS…KSAS), 501-561 (LQSK…RTNK), and 575-648 (SLVR…PSNM). 6 stretches are compositionally biased toward polar residues: residues 307–334 (GATQSNSHPEKTSGSGRDQAGLNDNSSK), 375–385 (TGRSSVSQSSD), 411–435 (TLSSTGSVSDSPHRVTLTSAPKSAS), 501–533 (LQSKAADSRRLSSSRNEPDLPTSSLLERSQSQP), 589–602 (DLISYNANRDSSPT), and 630–648 (VSSSSGGNMTAPNSRPSNM).

This sequence belongs to the WD repeat KATNB1 family. As to quaternary structure, component of KTN80-KTN1 complexes composed of a hexamer of KTN1-KTN80 heterodimers that sense microtubule (MT) geometry to confer precise MT severing. Interacts directly with AAA1/KTN1 and KTN80.1, and weakly with KTN80.4. Expressed in siliques, flowers, leaves, stems and roots.

The protein resides in the cytoplasm. Its subcellular location is the cytoskeleton. May participate in a complex which severs microtubules in an ATP-dependent manner. Microtubule severing may promote rapid reorganization of cellular microtubule arrays. Confers precision to microtubule (MT) severing by specific targeting of KTN1 to MT cleavage sites such as crossover or branching nucleation sites. Together with other KTN80s, regulates cell elongation by modulating MT organization. In Arabidopsis thaliana (Mouse-ear cress), this protein is Katanin p80 WD40 repeat-containing subunit B1 homolog KTN80.3.